Consider the following 491-residue polypeptide: 3-phosphoinositide-dependent protein kinase 1 (491 aa).

A Protein kinase domain is found at 44–311 (FEFGKIYGVG…YVALKRHPFF (268 aa)). ATP-binding positions include 54-56 (SYS) and lysine 73. The PIF-pocket stretch occupies residues 75–119 (MDKKFITKENKTAYVKLERIVLDQLEHPGIIKLYFTFQDTSSLYM). The PIF-binding stretch occupies residues 77 to 112 (KKFITKENKTAYVKLERIVLDQLEHPGIIKLYFTFQ). ATP contacts are provided by residues 122 to 124 (ESC) and glutamate 128. Aspartate 167 functions as the Proton acceptor in the catalytic mechanism. Glutamate 171 lines the ATP pocket. Residue serine 177 is modified to Phosphoserine. Aspartate 185 lines the ATP pocket. The activation loop stretch occupies residues 185–222 (DFGSVKPMQDSQITVLPNAASDDKACTFVGTAAYVPPE). Position 211 is a phosphothreonine; by autocatalysis (threonine 211). Phosphoserine occurs at positions 276 and 337. The segment at 321-377 (SQTPPKLAPDPASQTASPERDDTHGSPWNLTHIGDSLATQNEGHSAPPTSSESSGSI) is disordered. The segment covering 365–376 (SAPPTSSESSGS) has biased composition (low complexity). Position 382 is a phosphoserine (serine 382). The PH domain occupies 386 to 491 (FDSRWQQFLE…KKAIETLQNR (106 aa)).

This sequence belongs to the protein kinase superfamily. AGC Ser/Thr protein kinase family. PDPK1 subfamily. As to quaternary structure, interacts with AGC1-5 and AGC1-7. Interacts with the C-terminal PIF domain of the protein kinases D6PK/AGC1-1, OXI1/AGC2-1 and PID. Post-translationally, phosphorylation on Thr-211 in the activation loop is required for full activity. PDK1 itself can autophosphorylate Thr-211, leading to its own activation. Ubiquitous.

It localises to the cytoplasm. It is found in the membrane. It catalyses the reaction L-seryl-[protein] + ATP = O-phospho-L-seryl-[protein] + ADP + H(+). It carries out the reaction L-threonyl-[protein] + ATP = O-phospho-L-threonyl-[protein] + ADP + H(+). Activated by phosphatidic acid (PA) and in response to the fungal elicitor xylanase. Its function is as follows. May couple lipid signals to the activation-loop phosphorylation of several protein kinases of the so-called AGC kinase family. Interacts via its pleckstrin homology domain with phosphatidic acid, PtdIns3P and PtdIns(3,4)P2 and to a lesser extent with PtdIns(4,5)P2 and PtdIns4P. May play a general role in signaling processes controlling the pathogen/stress response, polar auxin transport and development. Transphosphorylates the AGC protein kinases OXI1/AGC2-1, PK1/S6K1, PK19/S6K2 and PID resulting in their activation. In Arabidopsis thaliana (Mouse-ear cress), this protein is 3-phosphoinositide-dependent protein kinase 1 (PDPK1).